Reading from the N-terminus, the 348-residue chain is Uroporphyrinogen decarboxylase (348 aa).

Substrate contacts are provided by residues 24–28, Asp-73, Tyr-150, Ser-205, and His-324; that span reads RQAGR.

The protein belongs to the uroporphyrinogen decarboxylase family. As to quaternary structure, homodimer.

It localises to the cytoplasm. The enzyme catalyses uroporphyrinogen III + 4 H(+) = coproporphyrinogen III + 4 CO2. Its pathway is porphyrin-containing compound metabolism; protoporphyrin-IX biosynthesis; coproporphyrinogen-III from 5-aminolevulinate: step 4/4. Functionally, catalyzes the decarboxylation of four acetate groups of uroporphyrinogen-III to yield coproporphyrinogen-III. This is Uroporphyrinogen decarboxylase from Roseiflexus sp. (strain RS-1).